Here is a 380-residue protein sequence, read N- to C-terminus: Queuine tRNA-ribosyltransferase (380 aa).

Asp96 functions as the Proton acceptor in the catalytic mechanism. Substrate contacts are provided by residues 96-100 (DSGGF), Asp150, Gln193, and Gly220. The segment at 251-257 (GVGAPDS) is RNA binding. Asp270 serves as the catalytic Nucleophile. An RNA binding; important for wobble base 34 recognition region spans residues 275–279 (TRIAR). Positions 308, 310, 313, and 339 each coordinate Zn(2+).

The protein belongs to the queuine tRNA-ribosyltransferase family. As to quaternary structure, homodimer. Within each dimer, one monomer is responsible for RNA recognition and catalysis, while the other monomer binds to the replacement base PreQ1. Zn(2+) is required as a cofactor.

The enzyme catalyses 7-aminomethyl-7-carbaguanine + guanosine(34) in tRNA = 7-aminomethyl-7-carbaguanosine(34) in tRNA + guanine. Its pathway is tRNA modification; tRNA-queuosine biosynthesis. Catalyzes the base-exchange of a guanine (G) residue with the queuine precursor 7-aminomethyl-7-deazaguanine (PreQ1) at position 34 (anticodon wobble position) in tRNAs with GU(N) anticodons (tRNA-Asp, -Asn, -His and -Tyr). Catalysis occurs through a double-displacement mechanism. The nucleophile active site attacks the C1' of nucleotide 34 to detach the guanine base from the RNA, forming a covalent enzyme-RNA intermediate. The proton acceptor active site deprotonates the incoming PreQ1, allowing a nucleophilic attack on the C1' of the ribose to form the product. After dissociation, two additional enzymatic reactions on the tRNA convert PreQ1 to queuine (Q), resulting in the hypermodified nucleoside queuosine (7-(((4,5-cis-dihydroxy-2-cyclopenten-1-yl)amino)methyl)-7-deazaguanosine). The protein is Queuine tRNA-ribosyltransferase of Streptococcus gordonii (strain Challis / ATCC 35105 / BCRC 15272 / CH1 / DL1 / V288).